A 521-amino-acid polypeptide reads, in one-letter code: Glucose-1-phosphate adenylyltransferase small subunit, chloroplastic (521 aa).

Residues 1–24 (MAASIGALKSSPSSHNCINERRND) are disordered. A chloroplast-targeting transit peptide spans 1–72 (MAASIGALKS…RSPLIVSPKA (72 aa)).

It belongs to the bacterial/plant glucose-1-phosphate adenylyltransferase family. As to quaternary structure, heterotetramer.

It is found in the plastid. The protein localises to the chloroplast. It catalyses the reaction alpha-D-glucose 1-phosphate + ATP + H(+) = ADP-alpha-D-glucose + diphosphate. It participates in glycan biosynthesis; starch biosynthesis. Its activity is regulated as follows. Activated by 3'phosphoglycerate, inhibited by orthophosphate. Allosteric regulation. In terms of biological role, this protein plays a role in synthesis of starch. It catalyzes the synthesis of the activated glycosyl donor, ADP-glucose from Glc-1-P and ATP. This chain is Glucose-1-phosphate adenylyltransferase small subunit, chloroplastic, found in Solanum lycopersicum (Tomato).